We begin with the raw amino-acid sequence, 594 residues long: Zinc finger protein 467 (594 aa).

Positions 1–86 (MRETLEALNS…PQKAEPAGSV (86 aa)) are disordered. The interaction with STAT3 stretch occupies residues 1 to 183 (MRETLEALNS…TLRLHQRLHR (183 aa)). Positions 31–47 (SNAQEKMSSRGESTLHS) are enriched in polar residues. Residues 54–64 (PGQKEGIHTEQ) are compositionally biased toward basic and acidic residues. Lys97 participates in a covalent cross-link: Glycyl lysine isopeptide (Lys-Gly) (interchain with G-Cter in SUMO2). 12 consecutive C2H2-type zinc fingers follow at residues 160–182 (YGCE…QRLH), 188–210 (CACP…QRSH), 216–238 (FPCS…LRTH), 244–266 (YPCA…QKTH), 272–294 (FPCT…QRIH), 300–322 (YQCT…QRVH), 355–377 (FACS…QSLH), 430–452 (FFCP…RRVH), 458–480 (FACA…SRAH), 486–508 (FACA…QAVH), 514–536 (HACA…QAIH), and 542–564 (FSCP…QRIH). Positions 313–351 (QHLVRHQRVHDAASRTRSSPDIPVAPHSPTASLTPSPPG) are disordered. Lys368 is covalently cross-linked (Glycyl lysine isopeptide (Lys-Gly) (interchain with G-Cter in SUMO2)).

The protein belongs to the krueppel C2H2-type zinc-finger protein family. Interacts with STAT3. Enhances STAT3 activity by keeping it in the nucleus.

The protein resides in the nucleus. Transcription factor that promotes adipocyte differentiation and suppresses osteoblast differentiation in the bone marrow. Enhances the osteoclast-supporting ability of stromal cells. Binds with STAT3 the consensus sequence 5'-CTTCTGGGAAGA-3' of the acute phase response element (APRE). Transactivates several promoters including FOS, OSM and PPARG. Recruits a histone deacetylase complex. The protein is Zinc finger protein 467 (Znf467) of Mus musculus (Mouse).